Consider the following 704-residue polypeptide: PHD finger protein MALE MEIOCYTE DEATH 1 (704 aa).

A PHD-type zinc finger spans residues 606–656; that stretch reads MVKCICRARDDDGERMISCDVCEVWQHTRCCGIDDSDTLPPLFVCSNCCEE. Zn(2+) is bound by residues C609, C611, C624, C627, H632, C635, C650, and C653.

In terms of assembly, interacts with JMJ16 in the nucleus of male meiocytes, especially on pachytene chromosomes. Expressed in inflorescence, specifically in male meiocytes.

The protein localises to the nucleus. Probable transcription factor required for chromosome organization and progression during male meiosis (e.g. microsporogenesis). Necessary for fertility and meiotic progressive compaction of prophase I chromosomes to metaphase I bivalents. Together with JMJ16, promotes gene expression in male meiocytes in an H3K9me3-dependent manner, and contributes to meiotic chromosome condensation by triggering some condensin promoters (e.g. CAP-D3 and CAP-H). This is PHD finger protein MALE MEIOCYTE DEATH 1 from Arabidopsis thaliana (Mouse-ear cress).